Consider the following 362-residue polypeptide: Patr class I histocompatibility antigen, B-2 alpha chain (362 aa).

The first 24 residues, 1 to 24, serve as a signal peptide directing secretion; that stretch reads MQVTAPRTVLLLLSAALALTETWA. The tract at residues 25–114 is alpha-1; that stretch reads GSHSMKYFYT…LRGYYNQSEA (90 aa). Residues 25 to 308 are Extracellular-facing; the sequence is GSHSMKYFYT…EPSSQSTIPI (284 aa). N110 carries an N-linked (GlcNAc...) asparagine glycan. An alpha-2 region spans residues 115-206; sequence GSHIIQRMYG…ENGKETLQRA (92 aa). Disulfide bonds link C125/C188 and C227/C283. The alpha-3 stretch occupies residues 207–298; it reads DPPKTHVTHH…GLPKPLTLRW (92 aa). The 87-residue stretch at 209 to 295 folds into the Ig-like C1-type domain; it reads PKTHVTHHPI…QHEGLPKPLT (87 aa). The segment at 299–308 is connecting peptide; that stretch reads EPSSQSTIPI. A helical transmembrane segment spans residues 309-332; sequence VGIVAGLAVLAVVVIGAVVAAVMC. The Cytoplasmic segment spans residues 333 to 362; that stretch reads RRKSSGGKGGSYSQAASSDSAQGSDVSLTA. Residues 336–362 form a disordered region; the sequence is SSGGKGGSYSQAASSDSAQGSDVSLTA. Residues 343 to 362 show a composition bias toward low complexity; it reads SYSQAASSDSAQGSDVSLTA.

The protein belongs to the MHC class I family. As to quaternary structure, heterodimer of an alpha chain and a beta chain (beta-2-microglobulin).

The protein resides in the membrane. Involved in the presentation of foreign antigens to the immune system. The polypeptide is Patr class I histocompatibility antigen, B-2 alpha chain (Pan troglodytes (Chimpanzee)).